A 373-amino-acid polypeptide reads, in one-letter code: NADPH-dependent 3-keto-steroid reductase HSD3B3 (373 aa).

NADP(+) is bound by residues 10 to 15 (GAGGFL), Y155, and K159. Residue K159 is the Proton donor of the active site. Residues 288–308 (VALLYWFGFLLETVSFLLRPV) traverse the membrane as a helical segment.

Belongs to the 3-beta-HSD family. As to expression, high levels in adrenal gland, kidney and male liver (at protein level). Low levels in female liver (at protein level). Expressed in ovaries (at protein level).

It localises to the endoplasmic reticulum membrane. Its subcellular location is the mitochondrion membrane. The enzyme catalyses a 3beta-hydroxysteroid + NADP(+) = a 3-oxosteroid + NADPH + H(+). It carries out the reaction 5alpha-androstane-3beta,17beta-diol + NADP(+) = 17beta-hydroxy-5alpha-androstan-3-one + NADPH + H(+). The protein operates within steroid metabolism. Its function is as follows. Responsible for the reduction of the oxo group on the C-3 of 5alpha-androstane steroids. Catalyzes the conversion of dihydrotestosterone to its inactive form 5alpha-androstanediol, that does not bind androgen receptor/AR. Does not function as an isomerase. This Mesocricetus auratus (Golden hamster) protein is NADPH-dependent 3-keto-steroid reductase HSD3B3 (HSD3B3).